We begin with the raw amino-acid sequence, 105 residues long: Small ribosomal subunit protein bS6 (105 aa).

The protein belongs to the bacterial ribosomal protein bS6 family.

Functionally, binds together with bS18 to 16S ribosomal RNA. This Lawsonia intracellularis (strain PHE/MN1-00) protein is Small ribosomal subunit protein bS6.